The following is a 445-amino-acid chain: Phosphoglucosamine mutase (445 aa).

The active-site Phosphoserine intermediate is serine 102. 4 residues coordinate Mg(2+): serine 102, aspartate 241, aspartate 243, and aspartate 245. Serine 102 is modified (phosphoserine).

It belongs to the phosphohexose mutase family. Mg(2+) is required as a cofactor. Activated by phosphorylation.

It catalyses the reaction alpha-D-glucosamine 1-phosphate = D-glucosamine 6-phosphate. Catalyzes the conversion of glucosamine-6-phosphate to glucosamine-1-phosphate. This chain is Phosphoglucosamine mutase, found in Escherichia fergusonii (strain ATCC 35469 / DSM 13698 / CCUG 18766 / IAM 14443 / JCM 21226 / LMG 7866 / NBRC 102419 / NCTC 12128 / CDC 0568-73).